The following is a 59-amino-acid chain: Large ribosomal subunit protein uL30 (59 aa).

Belongs to the universal ribosomal protein uL30 family. As to quaternary structure, part of the 50S ribosomal subunit.

This Haemophilus ducreyi (strain 35000HP / ATCC 700724) protein is Large ribosomal subunit protein uL30.